The primary structure comprises 189 residues: MSLINKEILPFIAQAYDPKKDEFKEVSQDDLKGSWSVVCFYPADFSFVCPTELEDLQNQYDKLQDLGVNVFSVSTDTHFVHKAWHDHSDAISKIQYQMIGDPSQTITRNFDVLDEEAGLAQRGTFIIDPDGVVQAAEINADGIGRDASTLVNKIKAAQYVRQHPGEVCPAKWEEGSESLQPGLDLVGKI.

In terms of domain architecture, Thioredoxin spans 2 to 159 (SLINKEILPF…LVNKIKAAQY (158 aa)). Cysteine 49 functions as the Cysteine sulfenic acid (-SOH) intermediate in the catalytic mechanism.

Belongs to the peroxiredoxin family. AhpC/Prx1 subfamily. Homodimer; disulfide-linked, upon oxidation. 5 homodimers assemble to form a ring-like decamer.

It is found in the cytoplasm. The enzyme catalyses a hydroperoxide + NADH + H(+) = an alcohol + NAD(+) + H2O. Functionally, thiol-specific peroxidase that catalyzes the reduction of hydrogen peroxide and organic hydroperoxides to water and alcohols, respectively. Plays a role in cell protection against oxidative stress by detoxifying peroxides. In Staphylococcus haemolyticus (strain JCSC1435), this protein is Alkyl hydroperoxide reductase C (ahpC).